Here is a 218-residue protein sequence, read N- to C-terminus: ATP-dependent dethiobiotin synthetase BioD (218 aa).

10–15 is an ATP binding site; it reads NAGKTT. Mg(2+) is bound at residue threonine 14. Lysine 35 is an active-site residue. Threonine 39 is a binding site for substrate. Positions 52 and 116 each coordinate Mg(2+). Residues 116 to 119 and 176 to 177 contribute to the ATP site; these read EGAG and LR.

The protein belongs to the dethiobiotin synthetase family. Homodimer. Requires Mg(2+) as cofactor.

It is found in the cytoplasm. The enzyme catalyses (7R,8S)-7,8-diammoniononanoate + CO2 + ATP = (4R,5S)-dethiobiotin + ADP + phosphate + 3 H(+). Its pathway is cofactor biosynthesis; biotin biosynthesis; biotin from 7,8-diaminononanoate: step 1/2. Functionally, catalyzes a mechanistically unusual reaction, the ATP-dependent insertion of CO2 between the N7 and N8 nitrogen atoms of 7,8-diaminopelargonic acid (DAPA, also called 7,8-diammoniononanoate) to form a ureido ring. This Helicobacter pylori (strain Shi470) protein is ATP-dependent dethiobiotin synthetase BioD.